The chain runs to 338 residues: Holliday junction branch migration complex subunit RuvB (338 aa).

The tract at residues 1–22 (MVDDERVVSPETADDHEDSVEK) is disordered. Residues 4–185 (DERVVSPETA…FGIVEHMAYY (182 aa)) form a large ATPase domain (RuvB-L) region. Residues Leu-24, Arg-25, Gly-66, Lys-69, Thr-70, Thr-71, 132–134 (EDF), Arg-175, Tyr-185, and Arg-222 each bind ATP. Residue Thr-70 coordinates Mg(2+). The tract at residues 186–257 (ETTDLQEIVL…IVDHALDLLR (72 aa)) is small ATPAse domain (RuvB-S). A head domain (RuvB-H) region spans residues 260–338 (SAGLDATDIK…HLGRTMPDNN (79 aa)). Arg-315 and Arg-320 together coordinate DNA.

The protein belongs to the RuvB family. In terms of assembly, homohexamer. Forms an RuvA(8)-RuvB(12)-Holliday junction (HJ) complex. HJ DNA is sandwiched between 2 RuvA tetramers; dsDNA enters through RuvA and exits via RuvB. An RuvB hexamer assembles on each DNA strand where it exits the tetramer. Each RuvB hexamer is contacted by two RuvA subunits (via domain III) on 2 adjacent RuvB subunits; this complex drives branch migration. In the full resolvosome a probable DNA-RuvA(4)-RuvB(12)-RuvC(2) complex forms which resolves the HJ.

The protein localises to the cytoplasm. The enzyme catalyses ATP + H2O = ADP + phosphate + H(+). Its function is as follows. The RuvA-RuvB-RuvC complex processes Holliday junction (HJ) DNA during genetic recombination and DNA repair, while the RuvA-RuvB complex plays an important role in the rescue of blocked DNA replication forks via replication fork reversal (RFR). RuvA specifically binds to HJ cruciform DNA, conferring on it an open structure. The RuvB hexamer acts as an ATP-dependent pump, pulling dsDNA into and through the RuvAB complex. RuvB forms 2 homohexamers on either side of HJ DNA bound by 1 or 2 RuvA tetramers; 4 subunits per hexamer contact DNA at a time. Coordinated motions by a converter formed by DNA-disengaged RuvB subunits stimulates ATP hydrolysis and nucleotide exchange. Immobilization of the converter enables RuvB to convert the ATP-contained energy into a lever motion, pulling 2 nucleotides of DNA out of the RuvA tetramer per ATP hydrolyzed, thus driving DNA branch migration. The RuvB motors rotate together with the DNA substrate, which together with the progressing nucleotide cycle form the mechanistic basis for DNA recombination by continuous HJ branch migration. Branch migration allows RuvC to scan DNA until it finds its consensus sequence, where it cleaves and resolves cruciform DNA. In Levilactobacillus brevis (strain ATCC 367 / BCRC 12310 / CIP 105137 / JCM 1170 / LMG 11437 / NCIMB 947 / NCTC 947) (Lactobacillus brevis), this protein is Holliday junction branch migration complex subunit RuvB.